The following is a 231-amino-acid chain: Large ribosomal subunit protein uL1 (231 aa).

This sequence belongs to the universal ribosomal protein uL1 family. As to quaternary structure, part of the 50S ribosomal subunit.

In terms of biological role, binds directly to 23S rRNA. The L1 stalk is quite mobile in the ribosome, and is involved in E site tRNA release. Protein L1 is also a translational repressor protein, it controls the translation of the L11 operon by binding to its mRNA. The sequence is that of Large ribosomal subunit protein uL1 from Acidovorax ebreus (strain TPSY) (Diaphorobacter sp. (strain TPSY)).